Consider the following 758-residue polypeptide: Actin filament-associated protein 1-like 1 (758 aa).

The disordered stretch occupies residues 91 to 194 (YRDSSENLSC…YESYDEEDEE (104 aa)). The segment covering 102–120 (LPPPPSAPPPPLPTTPPPE) has biased composition (pro residues). Residues 137-148 (YITSRNSSSPPN) show a composition bias toward polar residues. Residues 177–186 (ESDGLSSSYE) show a composition bias toward low complexity. In terms of domain architecture, PH 1 spans 216–312 (DSRICAFLLR…WLRVIKEVIS (97 aa)). The interval 335–369 (SHDKTSDSDSAANGENSSLSSGKENRDTGKCRKGG) is disordered. Polar residues predominate over residues 342 to 356 (SDSAANGENSSLSSG). The 95-residue stretch at 409 to 503 (EVPCCGYLSV…WLGLLLAQTG (95 aa)) folds into the PH 2 domain. A coiled-coil region spans residues 602 to 690 (KTRAEEDARK…TEVKENLKKS (89 aa)). The segment at 692–758 (AGGPTLGLAV…KAKEWEKKKP (67 aa)) is disordered. A compositionally biased stretch (basic and acidic residues) spans 749 to 758 (KAKEWEKKKP).

The protein localises to the cytoplasm. It is found in the cell projection. The protein resides in the podosome. It localises to the invadopodium. Its subcellular location is the cytoskeleton. The protein localises to the stress fiber. In terms of biological role, may be involved in podosome and invadosome formation. In Xenopus tropicalis (Western clawed frog), this protein is Actin filament-associated protein 1-like 1 (afap1l1).